The following is a 102-amino-acid chain: Cytochrome b (102 aa).

3 helical membrane passes run 1–21 (FGSL…FLAM), 45–66 (WLMR…FLHI), and 81–101 (WNIG…GYVL). Residues His-51 and His-65 each coordinate heme b.

It belongs to the cytochrome b family. The cytochrome bc1 complex contains 3 respiratory subunits (MT-CYB, CYC1 and UQCRFS1), 2 core proteins (UQCRC1 and UQCRC2) and probably 6 low-molecular weight proteins. Heme b is required as a cofactor.

The protein resides in the mitochondrion inner membrane. Its function is as follows. Component of the ubiquinol-cytochrome c reductase complex (complex III or cytochrome b-c1 complex) that is part of the mitochondrial respiratory chain. The b-c1 complex mediates electron transfer from ubiquinol to cytochrome c. Contributes to the generation of a proton gradient across the mitochondrial membrane that is then used for ATP synthesis. This chain is Cytochrome b (mt-cyb), found in Ambystoma tigrinum (Eastern tiger salamander).